The primary structure comprises 227 residues: PKHD-type hydroxylase Bxeno_B2756 (227 aa).

The Fe2OG dioxygenase domain occupies 80–179 (QVYPPLFNRY…RVASFFWVQS (100 aa)). 3 residues coordinate Fe cation: histidine 98, aspartate 100, and histidine 160. Residue arginine 170 coordinates 2-oxoglutarate.

The cofactor is Fe(2+). Requires L-ascorbate as cofactor.

The polypeptide is PKHD-type hydroxylase Bxeno_B2756 (Paraburkholderia xenovorans (strain LB400)).